The following is a 553-amino-acid chain: Glucagon-like peptide 2 receptor (553 aa).

Residues Met1–Ala173 are Extracellular-facing. Disulfide bonds link Cys83-Cys105, Cys96-Cys137, and Cys118-Cys159. N-linked (GlcNAc...) asparagine glycosylation is found at Asn97, Asn113, Asn148, and Asn162. Residues Leu174–Thr198 form a helical membrane-spanning segment. Residues Leu199–Arg210 lie on the Cytoplasmic side of the membrane. A helical transmembrane segment spans residues Asn211–Phe235. Over Tyr236–Arg261 the chain is Extracellular. A helical membrane pass occupies residues Ser262–Leu285. Topologically, residues His286–Leu299 are cytoplasmic. The helical transmembrane segment at Trp300–Ala321 threads the bilayer. Residues Arg322–Ile339 lie on the Extracellular side of the membrane. The chain crosses the membrane as a helical span at residues Trp340–Leu362. The Cytoplasmic segment spans residues Lys363 to Ser386. The chain crosses the membrane as a helical span at residues Thr387–Thr405. Residues Asp406 to Arg417 are Extracellular-facing. Residues Leu418 to Phe438 traverse the membrane as a helical segment. Over Ala439–Glu550 the chain is Cytoplasmic.

The protein belongs to the G-protein coupled receptor 2 family.

The protein localises to the cell membrane. Functionally, this is a receptor for glucagon-like peptide 2. The activity of this receptor is mediated by G proteins which activate adenylyl cyclase. The chain is Glucagon-like peptide 2 receptor (GLP2R) from Homo sapiens (Human).